We begin with the raw amino-acid sequence, 95 residues long: uncharacterized protein (95 aa).

It belongs to the inositol monophosphatase superfamily.

This is an uncharacterized protein from Rhizobium leguminosarum bv. phaseoli.